A 72-amino-acid polypeptide reads, in one-letter code: Large ribosomal subunit protein uL29 (72 aa).

This sequence belongs to the universal ribosomal protein uL29 family.

The chain is Large ribosomal subunit protein uL29 from Microcystis aeruginosa (strain NIES-843 / IAM M-2473).